A 1398-amino-acid polypeptide reads, in one-letter code: DNA-directed RNA polymerase subunit beta' (1398 aa).

Zn(2+) is bound by residues C70, C72, C85, and C88. D460, D462, and D464 together coordinate Mg(2+). Residues C814, C888, C895, and C898 each contribute to the Zn(2+) site.

This sequence belongs to the RNA polymerase beta' chain family. As to quaternary structure, the RNAP catalytic core consists of 2 alpha, 1 beta, 1 beta' and 1 omega subunit. When a sigma factor is associated with the core the holoenzyme is formed, which can initiate transcription. Requires Mg(2+) as cofactor. The cofactor is Zn(2+).

It carries out the reaction RNA(n) + a ribonucleoside 5'-triphosphate = RNA(n+1) + diphosphate. Functionally, DNA-dependent RNA polymerase catalyzes the transcription of DNA into RNA using the four ribonucleoside triphosphates as substrates. The polypeptide is DNA-directed RNA polymerase subunit beta' (Pseudomonas putida (Arthrobacter siderocapsulatus)).